Consider the following 223-residue polypeptide: Nitrate reductase gamma chain (223 aa).

Residues 2 to 27 (SGQILWGIMPYIVLTIFIGGHIYRYQ) form a helical membrane-spanning segment. Topologically, residues 28 to 45 (HDQFGWTAKSSELLEKKK) are cytoplasmic. Residues 46-68 (LAAGSTLFHWGLLCVVGGHVMGI) traverse the membrane as a helical segment. H54 and H64 together coordinate heme b. Over 69 to 81 (LIPEGVYASLGIS) the chain is Extracellular. A helical membrane pass occupies residues 82–111 (EHMYHKMAIGAGLPAGIAACTGLVILTYRR). At 112 to 123 (LFDKRIRKTSSP) the chain is on the cytoplasmic side. A helical transmembrane segment spans residues 124-147 (SDILTLLLLLFMMLSGVAATFLNI). At 148 to 180 (DSKGFDYRTTVGPWFREIVLFRPDASLMESVPL) the chain is on the extracellular side. The helical transmembrane segment at 181-196 (WFKFHIVIGYVVFILW) threads the bilayer. Heme b is bound by residues H185 and H203. At 197-223 (PFTRLVHVFSLPLKYLTRSYVVYRKRS) the chain is on the cytoplasmic side.

The cofactor is heme.

It localises to the cell membrane. It carries out the reaction nitrate + a quinol = a quinone + nitrite + H2O. Functionally, the gamma chain is a membrane-embedded heme-iron unit resembling cytochrome b, which transfers electrons from quinones to the beta subunit. The chain is Nitrate reductase gamma chain (narI) from Bacillus subtilis (strain 168).